The chain runs to 956 residues: Pyruvate, phosphate dikinase, chloroplastic (956 aa).

A chloroplast-targeting transit peptide spans 1 to 79; the sequence is MMSSLFVEGM…AVLNPVSPPV (79 aa). T536 carries the phosphothreonine; by PDRP1 modification. The active-site Tele-phosphohistidine intermediate is the H538. The substrate site is built by R644, R701, E830, G851, T852, N853, and D854. E830 serves as a coordination point for Mg(2+). D854 is a Mg(2+) binding site. C916 (proton donor) is an active-site residue.

The protein belongs to the PEP-utilizing enzyme family. Homotetramer. It depends on Mg(2+) as a cofactor. Post-translationally, phosphorylation of Thr-536 in the dark inactivates the enzyme. Dephosphorylation upon light stimulation reactivates the enzyme.

The protein resides in the plastid. It localises to the chloroplast. The catalysed reaction is pyruvate + phosphate + ATP = phosphoenolpyruvate + AMP + diphosphate + H(+). With respect to regulation, activated by light-induced dephosphorylation. Inhibited by dark-induced phosphorylation. Both reactions are catalyzed by PDRP1. Its function is as follows. Formation of phosphoenolpyruvate. This is Pyruvate, phosphate dikinase, chloroplastic (PPDK) from Flaveria pringlei.